The following is a 535-amino-acid chain: EH domain-containing protein 3 (535 aa).

N-acetylmethionine is present on Met1. One can recognise a Dynamin-type G domain in the interval 55–286 (FDNKPMVLLV…DLFRDIQSLP (232 aa)). The tract at residues 65–72 (GQYSTGKT) is G1 motif. 65–72 (GQYSTGKT) serves as a coordination point for ATP. The interval 91–92 (EP) is G2 motif. The G3 motif stretch occupies residues 153–156 (DTPG). The stretch at 198-227 (DEFSEVIKALKNHEDKMRVVLNKADQIETQ) forms a coiled coil. A G4 motif region spans residues 219-222 (NKAD). ATP is bound at residue Lys220. Residue Ile243 is a region of interest, G5 motif. Residue Trp258 coordinates ATP. A Glycyl lysine isopeptide (Lys-Gly) (interchain with G-Cter in SUMO) cross-link involves residue Lys315. A phosphoserine mark is found at Ser349 and Ser456. One can recognise an EH domain in the interval 444–532 (DKPMYDEIFY…AHLLPPSKRK (89 aa)). One can recognise an EF-hand domain in the interval 476–511 (LPNSVLGKIWKLADIDKDGMLDDDEFALANHLIKVK). The Ca(2+) site is built by Asp489, Asp491, Asp493, Met495, and Glu500. Lys511 is covalently cross-linked (Glycyl lysine isopeptide (Lys-Gly) (interchain with G-Cter in SUMO)).

This sequence belongs to the TRAFAC class dynamin-like GTPase superfamily. Dynamin/Fzo/YdjA family. EHD subfamily. As to quaternary structure, homooligomer, and heterooligomer with EHD1, EHD2 and EHD4, ATP-binding is required for heterooligomerization. Interacts with PACSIN1. Interacts with PACSIN2. Interacts (via EH domain) with MICALL1. Interacts (via EH domain) with RAB11FIP2. Interacts with ANK2. As to expression, highly expressed in heart and brain and moderately expressed in kidney, liver, and placenta.

Its subcellular location is the recycling endosome membrane. It localises to the cell membrane. The protein resides in the cell projection. The protein localises to the cilium membrane. ATP- and membrane-binding protein that controls membrane reorganization/tubulation upon ATP hydrolysis. In vitro causes tubulation of endocytic membranes. Binding to phosphatidic acid induces its membrane tubulation activity. Plays a role in endocytic transport. Involved in early endosome to recycling endosome compartment (ERC), retrograde early endosome to Golgi, and endosome to plasma membrane (rapid recycling) protein transport. Involved in the regulation of Golgi maintenance and morphology. Involved in the recycling of internalized D1 dopamine receptor. Plays a role in cardiac protein trafficking probably implicating ANK2. Involved in the ventricular membrane targeting of SLC8A1 and CACNA1C and probably the atrial membrane localization of CACNA1GG and CACNA1H implicated in the regulation of atrial myocyte excitability and cardiac conduction. In conjunction with EHD4 may be involved in endocytic trafficking of KDR/VEGFR2 implicated in control of glomerular function. Involved in the rapid recycling of integrin beta-3 implicated in cell adhesion maintenance. Involved in the unidirectional retrograde dendritic transport of endocytosed BACE1 and in efficient sorting of BACE1 to axons implicating a function in neuronal APP processing. Plays a role in the formation of the ciliary vesicle, an early step in cilium biogenesis; possibly sharing redundant functions with EHD1. This Homo sapiens (Human) protein is EH domain-containing protein 3.